The following is a 66-amino-acid chain: Large ribosomal subunit protein uL29 (66 aa).

This sequence belongs to the universal ribosomal protein uL29 family.

In Syntrophobacter fumaroxidans (strain DSM 10017 / MPOB), this protein is Large ribosomal subunit protein uL29.